A 623-amino-acid chain; its full sequence is Regulatory solute carrier protein family 1 member 1 (623 aa).

Composition is skewed to polar residues over residues 1–16 (MSSL…QAHP), 83–99 (CASS…PAIP), and 133–144 (EASLSVTTTRMQ). Disordered regions lie at residues 1–48 (MSSL…PDSI), 71–99 (RKEQ…PAIP), 116–189 (SAEG…APHD), and 433–493 (EELT…PHCT). Basic and acidic residues-rich tracts occupy residues 150–159 (IGEKGWHPEY), 170–180 (QHEEPRNEQHE), and 460–473 (LVDK…RESV). Over residues 474–491 (NESSLVTLDSAKTSNQPH) the composition is skewed to polar residues. One can recognise a UBA domain in the interval 577–617 (IFPAADIDRILRAGFTLQEALGALHRVGGNADLALLVLLAK).

In terms of assembly, interacts with YRDC. As to expression, renal outer cortex and outer medulla, small intestine and liver.

The protein resides in the cell membrane. Its subcellular location is the nucleus. It is found in the golgi apparatus. It localises to the trans-Golgi network. Its function is as follows. Mediates transcriptional and post-transcriptional regulation of SLC5A1. Inhibits a dynamin and PKC-dependent exocytotic pathway of SLC5A1. Also involved in transcriptional regulation of SLC22A2. Exhibits glucose-dependent, short-term inhibition of SLC5A1 and SLC22A2 by inhibiting the release of vesicles from the trans-Golgi network. This is Regulatory solute carrier protein family 1 member 1 (RSC1A1) from Sus scrofa (Pig).